The chain runs to 464 residues: ATP synthase subunit beta (464 aa).

153–160 (GGAGVGKT) is an ATP binding site.

The protein belongs to the ATPase alpha/beta chains family. In terms of assembly, F-type ATPases have 2 components, CF(1) - the catalytic core - and CF(0) - the membrane proton channel. CF(1) has five subunits: alpha(3), beta(3), gamma(1), delta(1), epsilon(1). CF(0) has three main subunits: a(1), b(2) and c(9-12). The alpha and beta chains form an alternating ring which encloses part of the gamma chain. CF(1) is attached to CF(0) by a central stalk formed by the gamma and epsilon chains, while a peripheral stalk is formed by the delta and b chains.

It localises to the cell inner membrane. It catalyses the reaction ATP + H2O + 4 H(+)(in) = ADP + phosphate + 5 H(+)(out). Its function is as follows. Produces ATP from ADP in the presence of a proton gradient across the membrane. The catalytic sites are hosted primarily by the beta subunits. The protein is ATP synthase subunit beta of Burkholderia ambifaria (strain MC40-6).